The following is a 341-amino-acid chain: Anthranilate phosphoribosyltransferase (341 aa).

Residues Gly81, Gly84–Asp85, Asn91–Thr94, Lys109–Ser117, and Ser121 each bind 5-phospho-alpha-D-ribose 1-diphosphate. Gly81 serves as a coordination point for anthranilate. Ser93 is a binding site for Mg(2+). Asn112 is an anthranilate binding site. Arg167 contributes to the anthranilate binding site. 2 residues coordinate Mg(2+): Asp226 and Glu227.

This sequence belongs to the anthranilate phosphoribosyltransferase family. As to quaternary structure, homodimer. Mg(2+) is required as a cofactor.

It catalyses the reaction N-(5-phospho-beta-D-ribosyl)anthranilate + diphosphate = 5-phospho-alpha-D-ribose 1-diphosphate + anthranilate. The protein operates within amino-acid biosynthesis; L-tryptophan biosynthesis; L-tryptophan from chorismate: step 2/5. Functionally, catalyzes the transfer of the phosphoribosyl group of 5-phosphorylribose-1-pyrophosphate (PRPP) to anthranilate to yield N-(5'-phosphoribosyl)-anthranilate (PRA). This chain is Anthranilate phosphoribosyltransferase, found in Teredinibacter turnerae (strain ATCC 39867 / T7901).